A 240-amino-acid chain; its full sequence is Protein unc-119 homolog A (240 aa).

The segment covering 1–12 (MKVKKGGGGTGS) has biased composition (gly residues). Positions 1-62 (MKVKKGGGGT…PLQGKQPIGP (62 aa)) are disordered. Ser-37, Ser-39, and Ser-41 each carry phosphoserine; by CK2. Residue Tyr-131 participates in tetradecanoate binding.

Belongs to the PDE6D/unc-119 family. In terms of assembly, may interact with GTP-bound ARL1. Interacts with ARL2 and ARL3 (GTP-bound forms); this promotes the release of myristoylated cargo proteins. Found in a complex with ARL3, RP2 and UNC119; RP2 induces hydrolysis of GTP ARL3 in the complex, leading to the release of UNC119. Interacts with NPHP3 (when myristoylated). Interacts with CYS1 (when myristoylated). Interacts with MACIR; interaction only takes place when UNC119 is not liganded with myristoylated proteins. Interacts with CABP4; in the absence of calcium. Interacts with DNM1; leading to a decrease of DNM1 GTPase activity. Interacts with LCK; this interaction plays a crucial role in activation of LCK. Interacts with FYN. Interacts with RAB11A; in a cell cycle-dependent manner. Interacts with LYN (via SH2 and SH3 domains); leading to LYN activation. Found in a complex with ABL1, ABL2, CRK and UNC119; leading to the inhibition of CRK phosphorylation by ABL kinases. Interacts with CD44. Interacts with KLHL18 (via kelch repeats). Interacts with PPP3CA, PPP3CB and PPP3CC. Interacts with USP48; this interaction promotes UNC119 stability. Phosphorylation suppresses its interaction with KLHL18 and down-regulates its KLHL18-mediated degradation. Phosphorylated more under light conditions than dark conditions. Dephosphorylated by calcineurin. In terms of tissue distribution, localized in photoreceptor synapses in the outer plexiform layer of the retina.

It localises to the cytoplasm. The protein localises to the cytoskeleton. The protein resides in the microtubule organizing center. Its subcellular location is the centrosome. It is found in the spindle. It localises to the spindle pole. In terms of biological role, involved in synaptic functions in photoreceptor cells, the signal transduction in immune cells as a Src family kinase activator, endosome recycling, the uptake of bacteria and endocytosis, protein trafficking in sensory neurons and as lipid-binding chaperone with specificity for a diverse subset of myristoylated proteins. Specifically binds the myristoyl moiety of a subset of N-terminally myristoylated proteins and is required for their localization. Binds myristoylated GNAT1 and is required for G-protein localization and trafficking in sensory neurons. Probably plays a role in trafficking proteins in photoreceptor cells. Plays important roles in mediating Src family kinase signals for the completion of cytokinesis via RAB11A. The chain is Protein unc-119 homolog A (Unc119) from Mus musculus (Mouse).